The following is a 161-amino-acid chain: MMRLLLLPLFLFTLSMACMGQTFQYSRGWTNGKRALTPPSLLSHGHFNRASDLGFSDLYDVQDWSSERRLERCLAQLQRSLLSRVYGSVVDFNANRPEPDSSDSGSSRNRANNNNENVLYPTPIQNRHHSSNELLEEISAAVAGSGPTGAGSGEPSVFGKH.

Positions 1 to 20 (MMRLLLLPLFLFTLSMACMG) are cleaved as a signal peptide. At Gln21 the chain carries Pyrrolidone carboxylic acid. Asn31 is subject to Asparagine amide. Residues 70–161 (LERCLAQLQR…SGEPSVFGKH (92 aa)) constitute a propeptide that is removed on maturation. 2 disordered regions span residues 93 to 125 (NANR…TPIQ) and 142 to 161 (VAGS…FGKH). Positions 102–117 (SDSGSSRNRANNNNEN) are enriched in low complexity.

The protein belongs to the corazonin family.

The protein localises to the secreted. Its function is as follows. Cardioactive peptide. Corazonin is probably involved in the physiological regulation of the heart beat. Clock (Clk) and cycle (cyc) proteins negatively regulate Crz transcription in a cell-specific manner. In Drosophila pseudoobscura pseudoobscura (Fruit fly), this protein is Pro-corazonin.